The sequence spans 101 residues: Large ribosomal subunit protein bL21 (101 aa).

This sequence belongs to the bacterial ribosomal protein bL21 family. In terms of assembly, part of the 50S ribosomal subunit. Contacts protein L20.

Its function is as follows. This protein binds to 23S rRNA in the presence of protein L20. The sequence is that of Large ribosomal subunit protein bL21 from Corynebacterium diphtheriae (strain ATCC 700971 / NCTC 13129 / Biotype gravis).